The chain runs to 219 residues: MTQDELKKAVGWAALQYVQPGTIVGVGTGSTAAHFIDALGTMKGQIEGAVSSSDASTEKLKGLGIHVFDLNEVDSLGIYVDGADEINGHMQMIKGGGAALTREKIIASVAEKFICIADASKQVDILGKFPLPVEVIPMARSAVARQLVKLGGRPEYRQGVVTDNGNVILDVYGMEILDPIALENAINAIPGVVTVGLFANRGADVALIGTPDGVKTIVK.

Substrate is bound by residues 28–31 (TGST), 81–84 (DGAD), and 94–97 (KGGG). The active-site Proton acceptor is Glu-103. Substrate is bound at residue Lys-121.

It belongs to the ribose 5-phosphate isomerase family. In terms of assembly, homodimer.

The catalysed reaction is aldehydo-D-ribose 5-phosphate = D-ribulose 5-phosphate. It functions in the pathway carbohydrate degradation; pentose phosphate pathway; D-ribose 5-phosphate from D-ribulose 5-phosphate (non-oxidative stage): step 1/1. In terms of biological role, catalyzes the reversible conversion of ribose-5-phosphate to ribulose 5-phosphate. The polypeptide is Ribose-5-phosphate isomerase A (Salmonella arizonae (strain ATCC BAA-731 / CDC346-86 / RSK2980)).